The following is a 559-amino-acid chain: Phosphoinositide 3-phosphatase (559 aa).

In terms of domain architecture, Myotubularin phosphatase spans 120-541; sequence SWKSFLLENE…SSLRWWSASF (422 aa). The active-site Phosphocysteine intermediate is the C342.

It belongs to the protein-tyrosine phosphatase family. Non-receptor class myotubularin subfamily.

The protein resides in the cytoplasm. It carries out the reaction a 1,2-diacyl-sn-glycero-3-phospho-(1D-myo-inositol-3-phosphate) + H2O = a 1,2-diacyl-sn-glycero-3-phospho-(1D-myo-inositol) + phosphate. Its function is as follows. Lipid phosphatase which dephosphorylates phosphatidylinositol 3-monophosphate (PI3P). Involved in the control of PI3P-dependent signaling and in the maintenance of endosomal system integrity. The sequence is that of Phosphoinositide 3-phosphatase from Schizosaccharomyces pombe (strain 972 / ATCC 24843) (Fission yeast).